An 842-amino-acid polypeptide reads, in one-letter code: Follistatin-related protein 4 (842 aa).

The N-terminal stretch at 1-22 is a signal peptide; that stretch reads MKPGGFWLHLTLLGASLPAALG. The region spanning 81-135 is the Kazal-like domain; that stretch reads KTGEPECQCLEACRPSYVPVCGSDGRFYENHCKLHRAACLLGKRITVIHSKDCFL. 3 disulfide bridges follow: Cys87-Cys119, Cys93-Cys112, and Cys101-Cys133. One can recognise an EF-hand domain in the interval 174 to 209; sequence QKRLLVESLFRDLDADGNGHLSSSELAQHVLKKQDL. Asp187, Asp189, Asn191, His193, and Glu198 together coordinate Ca(2+). Ig-like domains follow at residues 251–338 and 341–426; these read PEDR…LQVN and PVIR…EDIS. Intrachain disulfides connect Cys270–Cys321 and Cys362–Cys413. A glycan (N-linked (GlcNAc...) asparagine) is linked at Asn318.

The protein resides in the secreted. In Homo sapiens (Human), this protein is Follistatin-related protein 4 (FSTL4).